We begin with the raw amino-acid sequence, 260 residues long: Beta-lactamase SHV-6 (260 aa).

The first 11 residues, 1-11 (LLATLPLAVHA), serve as a signal peptide directing secretion. The active-site Acyl-ester intermediate is S56. C63 and C109 are oxidised to a cystine. E154 functions as the Proton acceptor in the catalytic mechanism. Position 220–222 (220–222 (KTG)) interacts with substrate.

Belongs to the class-A beta-lactamase family.

The catalysed reaction is a beta-lactam + H2O = a substituted beta-amino acid. In terms of biological role, SHV enzymes hydrolyze broad spectrum cephalosporins notably cefotaxime and ceftazidime. In Klebsiella pneumoniae, this protein is Beta-lactamase SHV-6 (bla).